Reading from the N-terminus, the 105-residue chain is Heat shock protein HspQ (105 aa).

The disordered stretch occupies residues 84-105 (QPKLDELSASIKKQLKTPRLRN). A compositionally biased stretch (basic residues) spans 96–105 (KQLKTPRLRN).

The protein belongs to the HspQ family.

The protein localises to the cytoplasm. Involved in the degradation of certain denaturated proteins, including DnaA, during heat shock stress. This Wigglesworthia glossinidia brevipalpis protein is Heat shock protein HspQ.